The chain runs to 128 residues: AECKTTIDSTDQMSFNTKAIEIDKACKTFTVELTHSGSLPKNVMGHNLVISKQADMQPIATDGLSAGIDKNYLKEGDTRVIAHTKVIGAGEKDSLTIDVSKLNAAEKYGFFCSFPGHISMMKGTVTLK.

Positions alanine 1–lysine 128 constitute a Plastocyanin-like domain. Cysteines 3 and 26 form a disulfide. The Cu cation site is built by histidine 46, cysteine 112, histidine 117, and methionine 121.

Its subcellular location is the periplasm. Functionally, transfers electrons from cytochrome c551 to cytochrome oxidase. The sequence is that of Azurin from Pseudomonas fluorescens biotype B.